The primary structure comprises 937 residues: Protein translocase subunit SecA (937 aa).

ATP contacts are provided by residues glutamine 90, 108–112, and aspartate 509; that span reads GEGKT.

Belongs to the SecA family. In terms of assembly, monomer and homodimer. Part of the essential Sec protein translocation apparatus which comprises SecA, SecYEG and auxiliary proteins SecDF. Other proteins may also be involved.

The protein resides in the cell inner membrane. It is found in the cellular thylakoid membrane. The protein localises to the cytoplasm. The catalysed reaction is ATP + H2O + cellular proteinSide 1 = ADP + phosphate + cellular proteinSide 2.. Functionally, part of the Sec protein translocase complex. Interacts with the SecYEG preprotein conducting channel. Has a central role in coupling the hydrolysis of ATP to the transfer of proteins into and across the cell membrane, serving as an ATP-driven molecular motor driving the stepwise translocation of polypeptide chains across the membrane. In terms of biological role, probably participates in protein translocation into and across both the cytoplasmic and thylakoid membranes in cyanobacterial cells. The polypeptide is Protein translocase subunit SecA (Parasynechococcus marenigrum (strain WH8102)).